A 308-amino-acid polypeptide reads, in one-letter code: GTPase Era (308 aa).

In terms of domain architecture, Era-type G spans 14-181; it reads RCGFVALIGA…RRALAAAMPE (168 aa). Residues 22–29 form a G1 region; the sequence is GAPNVGKS. 22–29 lines the GTP pocket; it reads GAPNVGKS. A G2 region spans residues 48-52; the sequence is QTTRA. The segment at 69 to 72 is G3; it reads DTPG. Residues 69–73 and 131–134 each bind GTP; these read DTPGI and NKID. The interval 131-134 is G4; sequence NKID. The G5 stretch occupies residues 160 to 162; it reads VAA. The KH type-2 domain occupies 212-289; the sequence is LHQELPYQST…HLFLFVKVRD (78 aa).

The protein belongs to the TRAFAC class TrmE-Era-EngA-EngB-Septin-like GTPase superfamily. Era GTPase family. In terms of assembly, monomer.

Its subcellular location is the cytoplasm. The protein resides in the cell inner membrane. Its function is as follows. An essential GTPase that binds both GDP and GTP, with rapid nucleotide exchange. Plays a role in 16S rRNA processing and 30S ribosomal subunit biogenesis and possibly also in cell cycle regulation and energy metabolism. The sequence is that of GTPase Era from Afipia carboxidovorans (strain ATCC 49405 / DSM 1227 / KCTC 32145 / OM5) (Oligotropha carboxidovorans).